Reading from the N-terminus, the 488-residue chain is N-acyl-D-glutamate deacylase (488 aa).

It belongs to the metallo-dependent hydrolases superfamily. N-acyl-D-amino-acid deacylase family. Requires Zn(2+) as cofactor.

Its subcellular location is the cytoplasm. The enzyme catalyses an N-acyl-D-glutamate + H2O = D-glutamate + a carboxylate. Inhibited by cobalt, copper and EDTA. This is N-acyl-D-glutamate deacylase from Alcaligenes xylosoxydans xylosoxydans (Achromobacter xylosoxidans).